The sequence spans 538 residues: Pentatricopeptide repeat-containing protein At1g33350 (538 aa).

PPR repeat units follow at residues 87–123, 125–159, 160–191, 192–226, 227–253, 259–293, 294–324, 325–359, 363–398, and 399–433; these read NTHL…SVPR, NHFI…GFHL, YVVV…MSER, NVVS…DVPS, WNAI…MINE, NEVT…DLSS, DVFV…ASKK, SLTA…NIND, DHIT…GIEP, and RIEH…ADEA. Positions 434 to 509 are type E motif; the sequence is IWGSLLNACK…PPGWSRIEID (76 aa).

Belongs to the PPR family. PCMP-E subfamily.

The polypeptide is Pentatricopeptide repeat-containing protein At1g33350 (PCMP-E57) (Arabidopsis thaliana (Mouse-ear cress)).